Reading from the N-terminus, the 144-residue chain is Maximins 4/H3 type 3 (144 aa).

Residues 1–18 form the signal peptide; the sequence is MNFKYIIAVSFFIASAYA. The propeptide occupies 19-43; sequence RTEEKDVQSLSQRDVLEEESLREIR. Position 70 is an asparagine amide (Asn70). A propeptide spanning residues 74–123 is cleaved from the precursor; sequence TAEDHEVMKRLEAVMRDLDSLDHPEEASERQTRGFNQEEIANLFTKKEKR. Ile143 carries the isoleucine amide modification.

It belongs to the bombinin family. Expressed by the skin glands.

The protein localises to the secreted. Functionally, maximin-4 shows antibacterial activity against both Gram-positive and Gram-negative bacteria. It also shows antimicrobial activity against the fungus C.albicans, but not against A.flavus nor P.uticale. It has little hemolytic activity. It does not possess a significant cytotoxicity against tumor cell lines. It does not possess a significant anti-HIV activity. Maximin-H3 shows antibacterial activity against both Gram-positive and Gram-negative bacteria. It also shows antimicrobial activity against the fungus C.albicans. Shows strong hemolytic activity. In Bombina maxima (Giant fire-bellied toad), this protein is Maximins 4/H3 type 3.